We begin with the raw amino-acid sequence, 396 residues long: MTEHNVRNFNINFGPQHPAAHGVLRLVLELDGEIVERVDPHIGLLHRGTEKLIEAKTYLQAIPYFDRLDYVAPMNQEHAFALAVERLTGTQVPIRGQLIRVLYSEIGRILSHLLNVTTQAMDVGALTPPLWGFEEREKLMVFYERACGARMHAAYFRPGGVHQDLPHQLVEDIGNWIDPFLKTVDDIDELLTGNRIFKQRNVDIGVVSLEDAWAWGFSGVMVRGSGAAWDLRRSQPYECYSDLEFDIPIGKNGDCFDRYLIRMIEMRQSARIMRQCVDRLLGDAKIGPVSSLDGKIVPPKRGEMKRSMEALIHHFKLYTEGYHVPAGEVYAAVEAPKGEFGVYLVSDGTNKPYRCKIRAPGYAHLQAMDFLCRGHQLADVSAVLGSLDIVFGEVDR.

The protein belongs to the complex I 49 kDa subunit family. NDH-1 is composed of 14 different subunits. Subunits NuoB, C, D, E, F, and G constitute the peripheral sector of the complex.

It is found in the cell inner membrane. The catalysed reaction is a quinone + NADH + 5 H(+)(in) = a quinol + NAD(+) + 4 H(+)(out). Its function is as follows. NDH-1 shuttles electrons from NADH, via FMN and iron-sulfur (Fe-S) centers, to quinones in the respiratory chain. The immediate electron acceptor for the enzyme in this species is believed to be ubiquinone. Couples the redox reaction to proton translocation (for every two electrons transferred, four hydrogen ions are translocated across the cytoplasmic membrane), and thus conserves the redox energy in a proton gradient. This is NADH-quinone oxidoreductase subunit D 1 from Rhizobium meliloti (strain 1021) (Ensifer meliloti).